The following is a 593-amino-acid chain: DNA topoisomerase I, mitochondrial (593 aa).

A mitochondrion-targeting transit peptide spans 1–43; it reads MLLLWLRALCRRFQHVPRRVPSRQVSRGSKASRAGWGETSKSS. Interaction with DNA stretches follow at residues 254–255, 317–322, and 414–416; these read KY, RTGNEK, and TAK. Residues 261 to 593 form the Topo IB-type catalytic domain; the sequence is SSKPKGEMDW…FNQAGEDFEF (333 aa). The active-site O-(3'-phospho-DNA)-tyrosine intermediate is tyrosine 551.

This sequence belongs to the type IB topoisomerase family. The cofactor is Ca(2+). Mg(2+) serves as cofactor.

It is found in the mitochondrion. The enzyme catalyses ATP-independent breakage of single-stranded DNA, followed by passage and rejoining.. Functionally, releases the supercoiling and torsional tension of DNA introduced during duplication of mitochondrial DNA by transiently cleaving and rejoining one strand of the DNA duplex. Introduces a single-strand break via transesterification at a target site in duplex DNA. The scissile phosphodiester is attacked by the catalytic tyrosine of the enzyme, resulting in the formation of a DNA-(3'-phosphotyrosyl)-enzyme intermediate and the expulsion of a 5'-OH DNA strand. The free DNA strand then rotates around the intact phosphodiester bond on the opposing strand, thus removing DNA supercoils. Finally, in the religation step, the DNA 5'-OH attacks the covalent intermediate to expel the active-site tyrosine and restore the DNA phosphodiester backbone. This Rattus norvegicus (Rat) protein is DNA topoisomerase I, mitochondrial (Top1mt).